The following is a 279-amino-acid chain: 3-methyl-2-oxobutanoate hydroxymethyltransferase (279 aa).

Residues aspartate 44 and aspartate 83 each contribute to the Mg(2+) site. Residues 44-45 (DS), aspartate 83, and lysine 112 contribute to the 3-methyl-2-oxobutanoate site. Mg(2+) is bound at residue glutamate 114. Glutamate 181 serves as the catalytic Proton acceptor.

It belongs to the PanB family. Homodecamer; pentamer of dimers. Mg(2+) serves as cofactor.

The protein resides in the cytoplasm. The enzyme catalyses 3-methyl-2-oxobutanoate + (6R)-5,10-methylene-5,6,7,8-tetrahydrofolate + H2O = 2-dehydropantoate + (6S)-5,6,7,8-tetrahydrofolate. Its pathway is cofactor biosynthesis; coenzyme A biosynthesis. Its function is as follows. Catalyzes the reversible reaction in which hydroxymethyl group from 5,10-methylenetetrahydrofolate is transferred onto alpha-ketoisovalerate to form ketopantoate. The chain is 3-methyl-2-oxobutanoate hydroxymethyltransferase from Nitrosopumilus maritimus (strain SCM1).